Reading from the N-terminus, the 380-residue chain is Cytochrome b (380 aa).

Transmembrane regions (helical) follow at residues 34-54 (FGSL…LLAA), 78-99 (WLIR…YLHI), 114-134 (WNTG…GYVL), and 179-199 (FFTL…IHLT). Residues histidine 84 and histidine 98 each coordinate heme b. Histidine 183 and histidine 197 together coordinate heme b. An a ubiquinone-binding site is contributed by histidine 202. 4 helical membrane passes run 227–247 (LKDI…ALFS), 289–309 (LGGV…PLLH), 321–341 (FSQL…WVGS), and 348–368 (FIII…ILFP).

The protein belongs to the cytochrome b family. As to quaternary structure, the cytochrome bc1 complex contains 11 subunits: 3 respiratory subunits (MT-CYB, CYC1 and UQCRFS1), 2 core proteins (UQCRC1 and UQCRC2) and 6 low-molecular weight proteins (UQCRH/QCR6, UQCRB/QCR7, UQCRQ/QCR8, UQCR10/QCR9, UQCR11/QCR10 and a cleavage product of UQCRFS1). This cytochrome bc1 complex then forms a dimer. Requires heme b as cofactor.

It localises to the mitochondrion inner membrane. Its function is as follows. Component of the ubiquinol-cytochrome c reductase complex (complex III or cytochrome b-c1 complex) that is part of the mitochondrial respiratory chain. The b-c1 complex mediates electron transfer from ubiquinol to cytochrome c. Contributes to the generation of a proton gradient across the mitochondrial membrane that is then used for ATP synthesis. The chain is Cytochrome b (MT-CYB) from Antigone vipio (White-naped crane).